The following is a 335-amino-acid chain: Phosphatidylglycerol--prolipoprotein diacylglyceryl transferase (335 aa).

A run of 3 helical transmembrane segments spans residues 31–51 (IYWY…TYSL), 67–87 (YIFL…LAIG), and 100–120 (LAIQ…FPLI). Arg163 contacts a 1,2-diacyl-sn-glycero-3-phospho-(1'-sn-glycerol). 3 helical membrane passes run 213-233 (PLFL…YFGL), 235-255 (YIKQ…YGVI), and 277-297 (SLLL…APIL).

It belongs to the Lgt family.

The protein localises to the cell membrane. It carries out the reaction L-cysteinyl-[prolipoprotein] + a 1,2-diacyl-sn-glycero-3-phospho-(1'-sn-glycerol) = an S-1,2-diacyl-sn-glyceryl-L-cysteinyl-[prolipoprotein] + sn-glycerol 1-phosphate + H(+). It participates in protein modification; lipoprotein biosynthesis (diacylglyceryl transfer). In terms of biological role, catalyzes the transfer of the diacylglyceryl group from phosphatidylglycerol to the sulfhydryl group of the N-terminal cysteine of a prolipoprotein, the first step in the formation of mature lipoproteins. The sequence is that of Phosphatidylglycerol--prolipoprotein diacylglyceryl transferase from Ureaplasma urealyticum serovar 10 (strain ATCC 33699 / Western).